A 318-amino-acid chain; its full sequence is Oxygen-evolving enhancer protein 1, chloroplastic (318 aa).

Residues methionine 1–alanine 18 form the signal peptide. Residues alanine 45–isoleucine 65 traverse the membrane as a helical segment.

This sequence belongs to the PsbO family.

It localises to the plastid. It is found in the chloroplast thylakoid membrane. Stabilizes the manganese cluster which is the primary site of water splitting. The chain is Oxygen-evolving enhancer protein 1, chloroplastic from Chattonella marina var. antiqua (Red tide flagellate).